A 305-amino-acid chain; its full sequence is MAISAAQVKELRERTGAGMMDCKKALQEANGDMDKAIEILRKKGIAKAAKKADRVASEGTIAVQVSEDYKCATIVEVNSETDFVAQNENFKSLVEKVKGHIAQSAVESVEELYKTPIDNVIFEEYMKAEIAKIGENIVVRRFDKICVEGPGVVNGYLHMGGKIGVIVAASCDKEDVCASLKDLLKDVAMHIAAMNPRYLDEASIPAEVIEKEKEIAAAQLEKEGKPANIIEKIIPGKIKKFVEENTLLGQKFVKDDKKSVKQVIDEAAKAAGGSAKIIGFIRYELGEGIEKKEEDFAAEVAAQMK.

The tract at residues 81 to 84 is involved in Mg(2+) ion dislocation from EF-Tu; that stretch reads TDFV.

This sequence belongs to the EF-Ts family.

Its subcellular location is the cytoplasm. Functionally, associates with the EF-Tu.GDP complex and induces the exchange of GDP to GTP. It remains bound to the aminoacyl-tRNA.EF-Tu.GTP complex up to the GTP hydrolysis stage on the ribosome. This is Elongation factor Ts from Nitratiruptor sp. (strain SB155-2).